Consider the following 305-residue polypeptide: MGENASFWESLIYAHPTCVTWKQEAEGSIYHLASILFVVGFMGGSGFSGLLYVFSLLGLGFLCSSVWAWLDVCAADIFSWNFILFAICFVQFIYVTYQVRSVSFDKEFQELYSALFQPLGISLTVYRKIVLCCDAEVITLEKEHCYAMQGKTPIDKLSLLVSGRIRVTVDGEFLHYIFPLQFLDSPEWDSLRPTEEGIFQVTLTAETDCRYVAWRRKKLYLLFAKHRFISRLFSILIGSDIAEKLYALNDRVHVGKGFRYDIRLPNFYHTSLPETPPVPPPRRLQRRSSGRPRPGVPNCSSPRKQ.

Asn-4 is a glycosylation site (N-linked (GlcNAc...) asparagine). Transmembrane regions (helical) follow at residues 34 to 54, 55 to 75, and 77 to 99; these read SILF…LYVF, SLLG…VCAA, and IFSW…TYQV. The interval 273–305 is disordered; that stretch reads PETPPVPPPRRLQRRSSGRPRPGVPNCSSPRKQ. Asn-298 carries N-linked (GlcNAc...) asparagine glycosylation.

The protein belongs to the popeye family. Expressed first preferentially in atrium and later also in the subepicardial compact layer of the ventricles.

It is found in the membrane. Its function is as follows. May play a role in the maintenance of heart function mediated, at least in part, through cAMP-binding. May play a role in the regulation of KCNK2-mediated current amplitude. This Gallus gallus (Chicken) protein is Popeye domain-containing protein 3 (POPDC3).